We begin with the raw amino-acid sequence, 214 residues long: Probable transaldolase 1 (214 aa).

Lys-83 (schiff-base intermediate with substrate) is an active-site residue.

Belongs to the transaldolase family. Type 3B subfamily.

It localises to the cytoplasm. It catalyses the reaction D-sedoheptulose 7-phosphate + D-glyceraldehyde 3-phosphate = D-erythrose 4-phosphate + beta-D-fructose 6-phosphate. The protein operates within carbohydrate degradation; pentose phosphate pathway; D-glyceraldehyde 3-phosphate and beta-D-fructose 6-phosphate from D-ribose 5-phosphate and D-xylulose 5-phosphate (non-oxidative stage): step 2/3. Its function is as follows. Transaldolase is important for the balance of metabolites in the pentose-phosphate pathway. The sequence is that of Probable transaldolase 1 from Listeria monocytogenes serotype 4b (strain F2365).